The chain runs to 312 residues: tRNA pseudouridine synthase B (312 aa).

Residue Asp47 is the Nucleophile of the active site.

It belongs to the pseudouridine synthase TruB family. Type 1 subfamily.

It carries out the reaction uridine(55) in tRNA = pseudouridine(55) in tRNA. Its function is as follows. Responsible for synthesis of pseudouridine from uracil-55 in the psi GC loop of transfer RNAs. This Vibrio cholerae serotype O1 (strain M66-2) protein is tRNA pseudouridine synthase B.